Reading from the N-terminus, the 75-residue chain is Putative antitoxin VapB12 (75 aa).

Its function is as follows. Putative antitoxin component of a possible type II toxin-antitoxin (TA) system. The cognate toxin is VapC12. The protein is Putative antitoxin VapB12 (vapB12) of Mycobacterium tuberculosis (strain CDC 1551 / Oshkosh).